Consider the following 86-residue polypeptide: Small ribosomal subunit protein bS16 (86 aa).

This sequence belongs to the bacterial ribosomal protein bS16 family.

This is Small ribosomal subunit protein bS16 from Methylacidiphilum infernorum (isolate V4) (Methylokorus infernorum (strain V4)).